The chain runs to 224 residues: 2-C-methyl-D-erythritol 4-phosphate cytidylyltransferase (224 aa).

Belongs to the IspD/TarI cytidylyltransferase family. IspD subfamily.

It catalyses the reaction 2-C-methyl-D-erythritol 4-phosphate + CTP + H(+) = 4-CDP-2-C-methyl-D-erythritol + diphosphate. The protein operates within isoprenoid biosynthesis; isopentenyl diphosphate biosynthesis via DXP pathway; isopentenyl diphosphate from 1-deoxy-D-xylulose 5-phosphate: step 2/6. In terms of biological role, catalyzes the formation of 4-diphosphocytidyl-2-C-methyl-D-erythritol from CTP and 2-C-methyl-D-erythritol 4-phosphate (MEP). The sequence is that of 2-C-methyl-D-erythritol 4-phosphate cytidylyltransferase from Caldicellulosiruptor bescii (strain ATCC BAA-1888 / DSM 6725 / KCTC 15123 / Z-1320) (Anaerocellum thermophilum).